Consider the following 746-residue polypeptide: WD repeat-containing protein 91 (746 aa).

Residues 183–215 are a coiled coil; the sequence is QRTNQVQEENEVLRQKLFALQAEIHRLKKEEQQ. Residue serine 256 is modified to Phosphoserine. Residues 265-278 are compositionally biased toward low complexity; the sequence is LLPQSKKSPSRLSP. Residues 265–336 are disordered; that stretch reads LLPQSKKSPS…QHRQRRLQDH (72 aa). Residues 282–299 are compositionally biased toward polar residues; that stretch reads PPQTQSSAKKESFGSQTT. 2 positions are modified to phosphoserine: serine 288 and serine 293. WD repeat units follow at residues 405–444, 447–487, 514–554, 559–598, 601–640, 663–701, and 708–746; these read EHHS…QTKA, ISKS…NLCE, AASS…QQLQ, PEPI…CAMS, AHCG…LKVS, VQVP…KVLE, and GHRA…AHKV.

It belongs to the WD repeat WDR91 family. In terms of assembly, interacts with WDR81; involved in early to late endosome cargo transport. Interacts with BECN1; negatively regulates the PI3 kinase/PI3K activity associated with endosomal membranes.

It localises to the early endosome membrane. It is found in the late endosome membrane. In terms of biological role, functions as a negative regulator of the PI3 kinase/PI3K activity associated with endosomal membranes via BECN1, a core subunit of the PI3K complex. By modifying the phosphatidylinositol 3-phosphate/PtdInsP3 content of endosomal membranes may regulate endosome fusion, recycling, sorting and early to late endosome transport. It is for instance, required for the delivery of cargos like BST2/tetherin from early to late endosome and thereby participates indirectly to their degradation by the lysosome. May play a role in meiosis. The protein is WD repeat-containing protein 91 of Bos taurus (Bovine).